Consider the following 430-residue polypeptide: DNA-binding protein cre-1 (430 aa).

Positions M1–S19 are enriched in polar residues. 4 disordered regions span residues M1–P77, I97–Y187, S265–S340, and L357–L430. The segment covering P30–P46 has biased composition (low complexity). C2H2-type zinc fingers lie at residues Y78 to H100 and H106 to H130. Basic and acidic residues predominate over residues I97–H106. Composition is skewed to polar residues over residues H130 to H147 and A175 to Y187. Basic and acidic residues predominate over residues H268–Y277. A compositionally biased stretch (low complexity) spans P289–S303. Polar residues predominate over residues S412–S422.

The protein belongs to the creA/MIG C2H2-type zinc-finger protein family.

The protein localises to the nucleus. Its function is as follows. Involved in carbon catabolite repression. Represses the transcription of a number of genes by binding to a GC-rich region in their promoter. In Neurospora crassa (strain ATCC 24698 / 74-OR23-1A / CBS 708.71 / DSM 1257 / FGSC 987), this protein is DNA-binding protein cre-1 (cre-1).